The chain runs to 2148 residues: Polyketide synthase 1 (2148 aa).

The N-terminal acylcarrier protein transacylase domain (SAT) stretch occupies residues 19–261; the sequence is FIFGDQSSCN…TPLAVHAPYH (243 aa). The region spanning 394 to 829 is the Ketosynthase family 3 (KS3) domain; that stretch reads ESKIAIIGMS…GGNTALLVED (436 aa). Active-site for beta-ketoacyl synthase activity residues include C566, H701, and H745. Residues 929–1233 form a malonyl-CoA:ACP transacylase (MAT) domain region; it reads AFVFSGQGSQ…PSLMRNKDGW (305 aa). The active-site For acyl/malonyl transferase activity is the S1018. Residues 1310–1624 form a product template (PT) domain region; that stretch reads TASVHRIVHE…RKVLNTAMPP (315 aa). The tract at residues 1314–1447 is N-terminal hotdog fold; it reads HRIVHESVEK…SSLHFEQPKV (134 aa). Positions 1314 to 1619 constitute a PKS/mFAS DH domain; it reads HRIVHESVEK…FQGIPRKVLN (306 aa). The Proton acceptor; for dehydratase activity role is filled by H1346. Residues 1474–1619 form a C-terminal hotdog fold region; that stretch reads LNSRMSSGVI…FQGIPRKVLN (146 aa). D1533 functions as the Proton donor; for dehydratase activity in the catalytic mechanism. A disordered region spans residues 1619–1655; sequence NTAMPPPKSQNEAPVRSGPAKPAAKPPRSASSEHSGH. Residues 1634-1650 show a composition bias toward low complexity; that stretch reads RSGPAKPAAKPPRSASS. Residues 1678–1752 enclose the Carrier 1 domain; sequence RNPMLPVFKI…DLAAHLGLDT (75 aa). At S1712 the chain carries O-(pantetheine 4'-phosphoryl)serine. 2 stretches are compositionally biased toward low complexity: residues 1757–1769 and 1779–1796; these read QSSG…GGLS and TSSV…SVSG. Positions 1757 to 1796 are disordered; the sequence is QSSGQSSSFGGLSPRSDSIGEITSSVTTPPSLSPRSSVSG. The region spanning 1793-1870 is the Carrier 2 domain; sequence SVSGSQCKDV…SFKHMFQQGH (78 aa). O-(pantetheine 4'-phosphoryl)serine is present on S1830. Residues 1882–2146 are thioesterase (TE) domain; sequence LKQYRATSTL…ERVAAFIRST (265 aa). S1973 functions as the For thioesterase activity in the catalytic mechanism.

Functionally, polyketide synthase; part of the Pks1 gene cluster that mediates the biosynthesis of an anthraquinone derivative pigment that contributes to conidial pigmentation that provides protection from UV radiation, heat and cold stress. The polyketide synthase Pks1 produces 1-acetyl-2,4,6,8-tetrahydroxy-9,10-anthraquinone though condensation of acetyl-CoA with malonyl-CoA. The dehydratase EthD and the laccase Mlac1 further convert the anthraquinone derivative into the final conidial pigment. The sequence is that of Polyketide synthase 1 from Metarhizium anisopliae (strain ARSEF 549).